The chain runs to 226 residues: NADH-quinone oxidoreductase subunit B 2 (226 aa).

C37, C38, C103, and C132 together coordinate [4Fe-4S] cluster.

This sequence belongs to the complex I 20 kDa subunit family. As to quaternary structure, NDH-1 is composed of 14 different subunits. Subunits NuoB, C, D, E, F, and G constitute the peripheral sector of the complex. [4Fe-4S] cluster serves as cofactor.

The protein resides in the cell membrane. The enzyme catalyses a quinone + NADH + 5 H(+)(in) = a quinol + NAD(+) + 4 H(+)(out). NDH-1 shuttles electrons from NADH, via FMN and iron-sulfur (Fe-S) centers, to quinones in the respiratory chain. The immediate electron acceptor for the enzyme in this species is believed to be a menaquinone. Couples the redox reaction to proton translocation (for every two electrons transferred, four hydrogen ions are translocated across the cytoplasmic membrane), and thus conserves the redox energy in a proton gradient. This is NADH-quinone oxidoreductase subunit B 2 from Salinispora arenicola (strain CNS-205).